Reading from the N-terminus, the 352-residue chain is 3-isopropylmalate dehydrogenase (352 aa).

An NAD(+)-binding site is contributed by 76-89 (GYKWENLPHDKKPE). Residues arginine 96, arginine 106, arginine 134, and aspartate 220 each coordinate substrate. The Mg(2+) site is built by aspartate 220, aspartate 244, and aspartate 248. An NAD(+)-binding site is contributed by 277–289 (GSAPDIAGQNKAN).

This sequence belongs to the isocitrate and isopropylmalate dehydrogenases family. LeuB type 1 subfamily. In terms of assembly, homodimer. It depends on Mg(2+) as a cofactor. Mn(2+) is required as a cofactor.

It localises to the cytoplasm. It catalyses the reaction (2R,3S)-3-isopropylmalate + NAD(+) = 4-methyl-2-oxopentanoate + CO2 + NADH. It participates in amino-acid biosynthesis; L-leucine biosynthesis; L-leucine from 3-methyl-2-oxobutanoate: step 3/4. Functionally, catalyzes the oxidation of 3-carboxy-2-hydroxy-4-methylpentanoate (3-isopropylmalate) to 3-carboxy-4-methyl-2-oxopentanoate. The product decarboxylates to 4-methyl-2 oxopentanoate. The polypeptide is 3-isopropylmalate dehydrogenase (Chlorobaculum tepidum (strain ATCC 49652 / DSM 12025 / NBRC 103806 / TLS) (Chlorobium tepidum)).